Here is a 201-residue protein sequence, read N- to C-terminus: Holliday junction branch migration complex subunit RuvA (201 aa).

Residues 1-64 (MYEYIRGQFQ…EDFIGLYGFT (64 aa)) are domain I. The segment at 65–143 (TKEELEMFKL…PDELTSEEEQ (79 aa)) is domain II. The segment at 144–152 (LIEGINDNS) is flexible linker. Residues 153–201 (DYSFNINETLSALMALGYTEKEAQKALEKVDKTLSIENMIKESLKLLMR) are domain III.

This sequence belongs to the RuvA family. In terms of assembly, homotetramer. Forms an RuvA(8)-RuvB(12)-Holliday junction (HJ) complex. HJ DNA is sandwiched between 2 RuvA tetramers; dsDNA enters through RuvA and exits via RuvB. An RuvB hexamer assembles on each DNA strand where it exits the tetramer. Each RuvB hexamer is contacted by two RuvA subunits (via domain III) on 2 adjacent RuvB subunits; this complex drives branch migration. In the full resolvosome a probable DNA-RuvA(4)-RuvB(12)-RuvC(2) complex forms which resolves the HJ.

The protein localises to the cytoplasm. The RuvA-RuvB-RuvC complex processes Holliday junction (HJ) DNA during genetic recombination and DNA repair, while the RuvA-RuvB complex plays an important role in the rescue of blocked DNA replication forks via replication fork reversal (RFR). RuvA specifically binds to HJ cruciform DNA, conferring on it an open structure. The RuvB hexamer acts as an ATP-dependent pump, pulling dsDNA into and through the RuvAB complex. HJ branch migration allows RuvC to scan DNA until it finds its consensus sequence, where it cleaves and resolves the cruciform DNA. This is Holliday junction branch migration complex subunit RuvA from Clostridium perfringens (strain SM101 / Type A).